Consider the following 824-residue polypeptide: AMP deaminase 2 (824 aa).

The segment at 1-43 is disordered; the sequence is MASYPGPGKSKAKYPFKKRAGLQASAAAPEARSGLGASPLQSA. Residues 10–20 show a composition bias toward basic residues; sequence SKAKYPFKKRA. Arg-44 carries the omega-N-methylarginine modification. Residues Ser-45, Ser-63, and Ser-79 each carry the phosphoserine modification. Residue Tyr-90 is modified to Phosphotyrosine. Residues Ser-96 and Ser-113 each carry the phosphoserine modification. Thr-133 is modified (phosphothreonine). Phosphoserine occurs at positions 135 and 137. Residues His-364 and His-366 each contribute to the Zn(2+) site. Substrate-binding positions include His-366 and 435–440; that span reads KFNAKY. Position 633 (His-633) interacts with Zn(2+). A substrate-binding site is contributed by Glu-636. The active-site Proton acceptor is His-655. Position 710 (Asp-710) interacts with Zn(2+). 711–714 is a binding site for substrate; it reads DPLQ.

The protein belongs to the metallo-dependent hydrolases superfamily. Adenosine and AMP deaminases family. As to quaternary structure, homotetramer. Zn(2+) is required as a cofactor.

The catalysed reaction is AMP + H2O + H(+) = IMP + NH4(+). Its pathway is purine metabolism; IMP biosynthesis via salvage pathway; IMP from AMP: step 1/1. Functionally, AMP deaminase plays a critical role in energy metabolism. Catalyzes the deamination of AMP to IMP and plays an important role in the purine nucleotide cycle. The chain is AMP deaminase 2 from Mus musculus (Mouse).